The primary structure comprises 254 residues: Cell division protein ZapD (254 aa).

It belongs to the ZapD family. In terms of assembly, interacts with FtsZ.

It is found in the cytoplasm. Cell division factor that enhances FtsZ-ring assembly. Directly interacts with FtsZ and promotes bundling of FtsZ protofilaments, with a reduction in FtsZ GTPase activity. The sequence is that of Cell division protein ZapD from Idiomarina loihiensis (strain ATCC BAA-735 / DSM 15497 / L2-TR).